The sequence spans 424 residues: Enolase (424 aa).

Residue Gln-165 participates in (2R)-2-phosphoglycerate binding. The Proton donor role is filled by Glu-207. The Mg(2+) site is built by Asp-244, Glu-283, and Asp-310. (2R)-2-phosphoglycerate is bound by residues Lys-335, Arg-364, Ser-365, and Lys-386. Residue Lys-335 is the Proton acceptor of the active site.

Belongs to the enolase family. Mg(2+) serves as cofactor.

It is found in the cytoplasm. The protein localises to the secreted. The protein resides in the cell surface. It catalyses the reaction (2R)-2-phosphoglycerate = phosphoenolpyruvate + H2O. The protein operates within carbohydrate degradation; glycolysis; pyruvate from D-glyceraldehyde 3-phosphate: step 4/5. Catalyzes the reversible conversion of 2-phosphoglycerate (2-PG) into phosphoenolpyruvate (PEP). It is essential for the degradation of carbohydrates via glycolysis. This is Enolase from Chlamydia trachomatis serovar D (strain ATCC VR-885 / DSM 19411 / UW-3/Cx).